We begin with the raw amino-acid sequence, 142 residues long: Large ribosomal subunit protein uL13 (142 aa).

This sequence belongs to the universal ribosomal protein uL13 family. In terms of assembly, part of the 50S ribosomal subunit.

Functionally, this protein is one of the early assembly proteins of the 50S ribosomal subunit, although it is not seen to bind rRNA by itself. It is important during the early stages of 50S assembly. This Alcanivorax borkumensis (strain ATCC 700651 / DSM 11573 / NCIMB 13689 / SK2) protein is Large ribosomal subunit protein uL13.